The primary structure comprises 283 residues: Polyamine aminopropyltransferase (283 aa).

The region spanning 5 to 240 is the PABS domain; sequence NTWFTEIHQD…GWWTATMACK (236 aa). Gln33 is a binding site for S-methyl-5'-thioadenosine. Residues His64 and Asp88 each coordinate spermidine. S-methyl-5'-thioadenosine-binding positions include Asp108 and 139 to 140; that span reads DG. The active-site Proton acceptor is Asp158. 158–161 provides a ligand contact to spermidine; that stretch reads DSTD. Residue Pro165 coordinates S-methyl-5'-thioadenosine.

Belongs to the spermidine/spermine synthase family. In terms of assembly, homodimer or homotetramer.

The protein localises to the cytoplasm. It carries out the reaction S-adenosyl 3-(methylsulfanyl)propylamine + putrescine = S-methyl-5'-thioadenosine + spermidine + H(+). It functions in the pathway amine and polyamine biosynthesis; spermidine biosynthesis; spermidine from putrescine: step 1/1. In terms of biological role, catalyzes the irreversible transfer of a propylamine group from the amino donor S-adenosylmethioninamine (decarboxy-AdoMet) to putrescine (1,4-diaminobutane) to yield spermidine. This Thioalkalivibrio sulfidiphilus (strain HL-EbGR7) protein is Polyamine aminopropyltransferase.